Reading from the N-terminus, the 238-residue chain is UPF0280 protein Msm_0088 (238 aa).

It belongs to the UPF0280 family.

This Methanobrevibacter smithii (strain ATCC 35061 / DSM 861 / OCM 144 / PS) protein is UPF0280 protein Msm_0088.